Reading from the N-terminus, the 107-residue chain is Thiosulfate sulfurtransferase GlpE (107 aa).

One can recognise a Rhodanese domain in the interval 16 to 104 (KKRDIVIADV…WKAHHPTSDA (89 aa)). C64 functions as the Cysteine persulfide intermediate in the catalytic mechanism.

Belongs to the GlpE family.

The protein resides in the cytoplasm. The catalysed reaction is thiosulfate + hydrogen cyanide = thiocyanate + sulfite + 2 H(+). It catalyses the reaction thiosulfate + [thioredoxin]-dithiol = [thioredoxin]-disulfide + hydrogen sulfide + sulfite + 2 H(+). In terms of biological role, transferase that catalyzes the transfer of sulfur from thiosulfate to thiophilic acceptors such as cyanide or dithiols. May function in a CysM-independent thiosulfate assimilation pathway by catalyzing the conversion of thiosulfate to sulfite, which can then be used for L-cysteine biosynthesis. The polypeptide is Thiosulfate sulfurtransferase GlpE (Coxiella burnetii (strain CbuK_Q154) (Coxiella burnetii (strain Q154))).